A 103-amino-acid chain; its full sequence is MAKRTQKVGITRKYGTRYGASLRKVVKKFEITQHAKYGCPFCGKVAVKRAAVGIWKCKPCKKIIAGGAWELTTPPAVTAKTTMNRLKKLQEEQAAAAALEKKN.

This sequence belongs to the eukaryotic ribosomal protein eL43 family.

The chain is Large ribosomal subunit protein eL43 (RPL37A) from Tetrahymena thermophila (strain SB210).